The sequence spans 339 residues: Probable E3 ubiquitin-protein ligase BAH1-like 1 (339 aa).

Residues 1 to 163 (MKFGAIYEEY…GSVSGRDFKS (163 aa)) enclose the SPX domain. The RING-type zinc finger occupies 235–284 (CPICLDTLFNPYALSCGHLFCKGCACGAASVYIFQGVKSAPPEAKCPVCR).

The protein belongs to the RING-type zinc finger family.

It catalyses the reaction S-ubiquitinyl-[E2 ubiquitin-conjugating enzyme]-L-cysteine + [acceptor protein]-L-lysine = [E2 ubiquitin-conjugating enzyme]-L-cysteine + N(6)-ubiquitinyl-[acceptor protein]-L-lysine.. Its pathway is protein modification; protein ubiquitination. This is Probable E3 ubiquitin-protein ligase BAH1-like 1 from Oryza sativa subsp. indica (Rice).